Reading from the N-terminus, the 130-residue chain is Histone H2A type 2-B (130 aa).

Residues 1–22 (MSGRGKQGGKARAKAKSRSSRA) form a disordered region. Position 2 is an N-acetylserine (Ser-2). Ser-2 bears the Phosphoserine; by RPS6KA5 mark. At Arg-4 the chain carries Citrulline; alternate. Position 4 is a symmetric dimethylarginine; by PRMT5; alternate (Arg-4). 2 positions are modified to N6-(2-hydroxyisobutyryl)lysine; alternate: Lys-6 and Lys-10. Lys-6 carries the post-translational modification N6-(beta-hydroxybutyryl)lysine; alternate. The segment covering 7-19 (QGGKARAKAKSRS) has biased composition (basic residues). Lys-10 is subject to N6-lactoyllysine; alternate. Lys-10 is subject to N6-succinyllysine; alternate. Residues Lys-14 and Lys-16 each participate in a glycyl lysine isopeptide (Lys-Gly) (interchain with G-Cter in ubiquitin) cross-link. N6-(2-hydroxyisobutyryl)lysine; alternate is present on Lys-37. Position 37 is an N6-(beta-hydroxybutyryl)lysine; alternate (Lys-37). Lys-37 bears the N6-crotonyllysine; alternate mark. N6-(2-hydroxyisobutyryl)lysine occurs at positions 75 and 76. Lys-96 carries the post-translational modification N6-(2-hydroxyisobutyryl)lysine; alternate. An N6-succinyllysine; alternate modification is found at Lys-96. Residue Lys-96 is modified to N6-glutaryllysine; alternate. Gln-105 bears the N5-methylglutamine mark. Residue Lys-119 is modified to N6-(2-hydroxyisobutyryl)lysine; alternate. N6-crotonyllysine; alternate is present on residues Lys-119 and Lys-120. Lys-119 and Lys-120 each carry N6-glutaryllysine; alternate. Lys-120 is modified (N6-(beta-hydroxybutyryl)lysine; alternate). Residue Lys-120 forms a Glycyl lysine isopeptide (Lys-Gly) (interchain with G-Cter in ubiquitin); alternate linkage. Position 121 is a phosphothreonine; by DCAF1 (Thr-121).

Belongs to the histone H2A family. The nucleosome is a histone octamer containing two molecules each of H2A, H2B, H3 and H4 assembled in one H3-H4 heterotetramer and two H2A-H2B heterodimers. The octamer wraps approximately 147 bp of DNA. In terms of processing, deiminated on Arg-4 in granulocytes upon calcium entry. Monoubiquitination of Lys-120 (H2AK119Ub) by RING1, TRIM37 and RNF2/RING2 complex gives a specific tag for epigenetic transcriptional repression and participates in X chromosome inactivation of female mammals. It is involved in the initiation of both imprinted and random X inactivation. Ubiquitinated H2A is enriched in inactive X chromosome chromatin. Ubiquitination of H2A functions downstream of methylation of 'Lys-27' of histone H3 (H3K27me). H2AK119Ub by RNF2/RING2 can also be induced by ultraviolet and may be involved in DNA repair. Following DNA double-strand breaks (DSBs), it is ubiquitinated through 'Lys-63' linkage of ubiquitin moieties by the E2 ligase UBE2N and the E3 ligases RNF8 and RNF168, leading to the recruitment of repair proteins to sites of DNA damage. Ubiquitination at Lys-14 and Lys-16 (H2AK13Ub and H2AK15Ub, respectively) in response to DNA damage is initiated by RNF168 that mediates monoubiquitination at these 2 sites, and 'Lys-63'-linked ubiquitin are then conjugated to monoubiquitin; RNF8 is able to extend 'Lys-63'-linked ubiquitin chains in vitro. Deubiquitinated by USP51 at Lys-14 and Lys-16 (H2AK13Ub and H2AK15Ub, respectively) after damaged DNA is repaired. H2AK119Ub and ionizing radiation-induced 'Lys-63'-linked ubiquitination (H2AK13Ub and H2AK15Ub) are distinct events. Post-translationally, phosphorylation on Ser-2 (H2AS1ph) is enhanced during mitosis. Phosphorylation on Ser-2 by RPS6KA5/MSK1 directly represses transcription. Acetylation of H3 inhibits Ser-2 phosphorylation by RPS6KA5/MSK1. Phosphorylation at Thr-121 (H2AT120ph) by DCAF1 is present in the regulatory region of many tumor suppresor genes and down-regulates their transcription. In terms of processing, symmetric dimethylation on Arg-4 by the PRDM1/PRMT5 complex may play a crucial role in the germ-cell lineage. Glutamine methylation at Gln-105 (H2AQ104me) by FBL is specifically dedicated to polymerase I. It is present at 35S ribosomal DNA locus and impairs binding of the FACT complex. Post-translationally, crotonylation (Kcr) is specifically present in male germ cells and marks testis-specific genes in post-meiotic cells, including X-linked genes that escape sex chromosome inactivation in haploid cells. Crotonylation marks active promoters and enhancers and confers resistance to transcriptional repressors. It is also associated with post-meiotically activated genes on autosomes. In terms of processing, hydroxybutyrylation of histones is induced by starvation. Lactylated in macrophages by EP300/P300 by using lactoyl-CoA directly derived from endogenous or exogenous lactate, leading to stimulates gene transcription.

Its subcellular location is the nucleus. It is found in the chromosome. In terms of biological role, core component of nucleosome. Nucleosomes wrap and compact DNA into chromatin, limiting DNA accessibility to the cellular machineries which require DNA as a template. Histones thereby play a central role in transcription regulation, DNA repair, DNA replication and chromosomal stability. DNA accessibility is regulated via a complex set of post-translational modifications of histones, also called histone code, and nucleosome remodeling. The chain is Histone H2A type 2-B from Mus musculus (Mouse).